Reading from the N-terminus, the 397-residue chain is tRNA-specific 2-thiouridylase MnmA (397 aa).

Residues 19-26 (AMSGGVDS) and Leu45 each bind ATP. The Nucleophile role is filled by Cys113. Cys113 and Cys210 are joined by a disulfide. Residue Gly137 coordinates ATP. The tract at residues 160–162 (RDQ) is interaction with tRNA. Cys210 (cysteine persulfide intermediate) is an active-site residue.

This sequence belongs to the MnmA/TRMU family.

It is found in the cytoplasm. The catalysed reaction is S-sulfanyl-L-cysteinyl-[protein] + uridine(34) in tRNA + AH2 + ATP = 2-thiouridine(34) in tRNA + L-cysteinyl-[protein] + A + AMP + diphosphate + H(+). Its function is as follows. Catalyzes the 2-thiolation of uridine at the wobble position (U34) of tRNA, leading to the formation of s(2)U34. The polypeptide is tRNA-specific 2-thiouridylase MnmA (Bradyrhizobium sp. (strain BTAi1 / ATCC BAA-1182)).